The primary structure comprises 314 residues: uncharacterized protein (314 aa).

To M.leprae ML0607.

This is an uncharacterized protein from Mycobacterium bovis (strain ATCC BAA-935 / AF2122/97).